The primary structure comprises 2828 residues: Matrix-remodeling-associated protein 5 (2828 aa).

A signal peptide spans 1 to 26; the sequence is MPKRAHWGALSVVLILLWGHPRVALA. The 29-residue stretch at 27–55 folds into the LRRNT domain; the sequence is CPHPCACYVPSEVHCTFRSLASVPAGIAK. LRR repeat units follow at residues 56-77, 80-101, 104-125, 128-149, 152-173, and 184-205; these read HVERINLGFNSIQALSETSFAG, KLELLMIHGNEIPSIPDGALRD, SLQVFKFSYNKLRVITGQTLQG, NLMRLHIDHNKIEFIHPQAFNG, SLRLLHLEGNLLHQLHPSTFST, and TIRHLYLAENMVRTLPASMLRN. An LRRCT domain is found at 217-277; the sequence is NPWTCDCEMR…HKLKDMTCLK (61 aa). Asn287 and Asn321 each carry an N-linked (GlcNAc...) asparagine glycan. Ig-like C2-type domains follow at residues 481-571 and 575-669; these read PSGA…YRVL and PSTQ…ITVT. Intrachain disulfides connect Cys501-Cys555 and Cys599-Cys651. Residue Asn633 is glycosylated (N-linked (GlcNAc...) asparagine). Disordered regions lie at residues 671 to 715, 933 to 962, 1068 to 1190, 1204 to 1275, and 1367 to 1389; these read KGSG…RRLL, KPTHEETATEGWSAADVGSSPEPTSSEYEP, QGGN…APDI, AWVD…SSET, and EESSPVGFPGTPTWNPSRTAQPG. A compositionally biased stretch (acidic residues) spans 695 to 708; sequence IVEDEGGSGMGDEE. O-linked (Xyl...) (chondroitin sulfate) serine glycosylation occurs at Ser702. A compositionally biased stretch (low complexity) spans 951 to 962; the sequence is SSPEPTSSEYEP. Positions 1090-1107 are enriched in polar residues; sequence SKSITLPDSTLGIMSSMS. The segment covering 1146–1168 has biased composition (basic residues); that stretch reads PSRRRPNGRRRLRPNKFRHRHKQ. Polar residues-rich tracts occupy residues 1169–1190 and 1204–1214; these read TPPTTFAPSETFSTQPTQAPDI and AWVDNTVNTPK. The segment covering 1229-1243 has biased composition (basic residues); sequence TPRRKHGKRPNKHRY. Residue Asn1403 is glycosylated (N-linked (GlcNAc...) asparagine). One copy of the LRR 7 repeat lies at 1410–1434; it reads LKELEDVDFTSEFLSSLTVSTPFHQ. Disordered stretches follow at residues 1479 to 1499, 1536 to 1566, 1579 to 1603, 1669 to 1689, and 1700 to 1719; these read QNHTPTAARMKEPASSSPSTI, NPETEATPVNNEGTQHMSGPNELSTPSSDQD, QVFGSRSLPRGPDSQRQDGRVHASH, STTIPLPLHMSKPSIPSKFTD, and KVFGNNNIPEARNPVGKPPS. Residues 1542-1566 show a composition bias toward polar residues; that stretch reads TPVNNEGTQHMSGPNELSTPSSDQD. The N-linked (GlcNAc...) asparagine glycan is linked to Asn1735. Ig-like C2-type domains follow at residues 1853-1946, 1950-2041, 2046-2140, 2146-2239, 2242-2343, 2345-2432, 2440-2534, 2542-2630, 2637-2722, and 2733-2828; these read PQIL…LSVT, PQIL…IRLH, PPVI…LNVQ, ARIT…VDVV, PAKI…KVVT, PATI…KTVW, PKIN…LQLT, PIFH…RLVS, PEAN…PSVT, and PRIT…IHVF. 2 disulfide bridges follow: Cys1875–Cys1928 and Cys1972–Cys2025. Asn2007 and Asn2056 each carry an N-linked (GlcNAc...) asparagine glycan. 8 disulfide bridges follow: Cys2069-Cys2122, Cys2168-Cys2221, Cys2265-Cys2324, Cys2368-Cys2418, Cys2466-Cys2518, Cys2564-Cys2616, Cys2659-Cys2711, and Cys2755-Cys2810. Asn2693 is a glycosylation site (N-linked (GlcNAc...) asparagine).

As to expression, detected in placenta (at protein level). Detected in cerebrospinal fluid and fibroblasts (at protein level). Highly expressed in kidney, also detected on liver and spleen. Expressed by proximal tubular cells of the kidney (at protein level). Expression highly increases during chronic kidney disease and autosomal dominant polycystic kidney disease, where is detected in cysts.

Its subcellular location is the secreted. Functionally, in kidney, has anti-inflammatory and anti-fibrotic properties by limiting the induction of chemokines, fibronectin and collagen expression in response to TGB1 and pro-inflammatory stimuli. In Homo sapiens (Human), this protein is Matrix-remodeling-associated protein 5 (MXRA5).